A 127-amino-acid chain; its full sequence is Large ribosomal subunit protein bL17 (127 aa).

Belongs to the bacterial ribosomal protein bL17 family. In terms of assembly, part of the 50S ribosomal subunit. Contacts protein L32.

The polypeptide is Large ribosomal subunit protein bL17 (Salmonella paratyphi A (strain AKU_12601)).